Here is a 409-residue protein sequence, read N- to C-terminus: Short chain dehydrogenase sirS (409 aa).

NADP(+) is bound by residues V49, L68, K195, V288, T290, and A299. Residues 306-332 (GVGPEGAGEEEGKGEAEGGAKGATGWS) form a disordered region.

This sequence belongs to the short-chain dehydrogenases/reductases (SDR) family. Highly divergent.

Its pathway is mycotoxin biosynthesis. Functionally, short chain dehydrogenase; part of the gene cluster that mediates the biosynthesis of sirodesmin PL, an epipolythiodioxopiperazine (ETP) characterized by a disulfide bridged cyclic dipeptide and that acts as a phytotoxin which is involved in the blackleg didease of canola. SirD catalyzes the O-prenylation of L-tyrosine (L-Tyr) in the presence of dimethylallyl diphosphate (DMAPP) to yield 4-O-dimethylallyl-L-Tyr, and therefore represents probably the first pathway-specific enzyme in the biosynthesis of sirodesmin PL. 4-O-dimethylallyl-L-Tyr, then undergoes condensation with L-Ser in a reaction catalyzed by the non-ribosomal peptide synthase sirP to form the diketopiperazine (DKP) backbone. Further bishydroxylation of the DKP performed by the cytochrome P450 monooxygenase sirC leads to the production of the intermediate phomamide. This step is essential to form the reactive thiol group required for toxicity of sirodesmin PL. The next steps of sirodesmin biosynthesis are not well understood yet, but some predictions could be made from intermediate compounds identification. Phomamide is converted into phomalizarine via oxidation, probably by sirT. Further oxidation, methylation (by sirM or sirN) and reduction steps convert phomalizarine to deacetyl sirodesmin. Finally, acetyltransferase sirH probably acetylates deacetyl sirodesmin to produce sirodesmin PL. The chain is Short chain dehydrogenase sirS from Leptosphaeria maculans (Blackleg fungus).